Consider the following 1722-residue polypeptide: Leucine-rich repeat- and IQ domain-containing protein 1 (1722 aa).

Disordered regions lie at residues 23–47 (SLEK…TDSV), 182–202 (EDKE…QFQE), 265–285 (RTRF…QQNN), and 319–367 (QEWK…YEEK). Residues 38–47 (QSDDSDTDSV) show a composition bias toward acidic residues. A compositionally biased stretch (basic and acidic residues) spans 265–278 (RTRFKDQQEKEKNS). Residues 283–312 (QNNAAVKIQAKYKAFVAYQKYGPIIKEQIE) enclose the IQ 1 domain. LRR repeat units follow at residues 819–840 (NLQF…SNCK), 841–861 (KLKY…ENLE), 862–883 (NLCV…DGCT), 884–905 (NIQC…FFLE), 970–991 (NLQQ…CDTP), 992–1013 (TIVY…ENCG), 1014–1035 (LLQI…ENLV), 1036–1057 (LLRE…SSYW), 1060–1081 (LLQN…FHFV), and 1082–1103 (SLEK…IKWF). Residues 1117 to 1157 (NPLLQETNWRDSLLKVLPALRILNGNILNSNSESRTEEHNQ) form the LRRCT domain. IQ domains are found at residues 1335–1364 (KIMA…LHTA) and 1395–1424 (REKA…AIKN). Residues 1506–1524 (SEHTQFNSRSENKTSSWTP) show a composition bias toward polar residues. The disordered stretch occupies residues 1506–1534 (SEHTQFNSRSENKTSSWTPESKTSRKSLL).

This chain is Leucine-rich repeat- and IQ domain-containing protein 1 (LRRIQ1), found in Homo sapiens (Human).